Here is a 67-residue protein sequence, read N- to C-terminus: Protein AaeX (67 aa).

A run of 2 helical transmembrane segments spans residues Phe-10–Val-30 and Phe-43–Phe-63.

Belongs to the AaeX family.

The protein localises to the cell membrane. In Pectobacterium carotovorum subsp. carotovorum (strain PC1), this protein is Protein AaeX.